A 62-amino-acid polypeptide reads, in one-letter code: uncharacterized protein (62 aa).

The first 19 residues, Met-1–Gly-19, serve as a signal peptide directing secretion.

This is an uncharacterized protein from Lepidoptera (butterflies and moths).